We begin with the raw amino-acid sequence, 938 residues long: Isoleucine--tRNA ligase (938 aa).

The 'HIGH' region signature appears at 58 to 68; the sequence is PYANGNIHIGH. Glutamate 561 provides a ligand contact to L-isoleucyl-5'-AMP. The 'KMSKS' region motif lies at 602-606; the sequence is KMSKS. Lysine 605 lines the ATP pocket. Residues cysteine 901, cysteine 904, cysteine 921, and cysteine 924 each contribute to the Zn(2+) site.

It belongs to the class-I aminoacyl-tRNA synthetase family. IleS type 1 subfamily. In terms of assembly, monomer. Zn(2+) is required as a cofactor.

Its subcellular location is the cytoplasm. It catalyses the reaction tRNA(Ile) + L-isoleucine + ATP = L-isoleucyl-tRNA(Ile) + AMP + diphosphate. Its function is as follows. Catalyzes the attachment of isoleucine to tRNA(Ile). As IleRS can inadvertently accommodate and process structurally similar amino acids such as valine, to avoid such errors it has two additional distinct tRNA(Ile)-dependent editing activities. One activity is designated as 'pretransfer' editing and involves the hydrolysis of activated Val-AMP. The other activity is designated 'posttransfer' editing and involves deacylation of mischarged Val-tRNA(Ile). The sequence is that of Isoleucine--tRNA ligase from Yersinia pseudotuberculosis serotype O:1b (strain IP 31758).